Here is a 425-residue protein sequence, read N- to C-terminus: Sensor histidine kinase NarS (425 aa).

A run of 6 helical transmembrane segments spans residues 42–62 (IASV…VVGT), 71–91 (IVLI…AYSA), 107–127 (LEPF…QLLS), 130–150 (GIYP…DVST), 155–175 (VVLA…PVML), and 181–201 (PETI…LMVV). The Histidine kinase domain occupies 224–425 (QTMTASEVLQ…HVCVELPLKR (202 aa)). Position 241 is a phosphohistidine; by autocatalysis (H241).

Post-translationally, autophosphorylated on His-241.

Its subcellular location is the cell membrane. It catalyses the reaction ATP + protein L-histidine = ADP + protein N-phospho-L-histidine.. In terms of biological role, member of the two-component regulatory system NarS/NarL involved in gene expression during aerobic nitrate metabolism. Plays therefore a crucial role in anaerobic survival of mycobacteria in host. Functions as a sensor protein kinase which is autophosphorylated at a histidine residue and transfers its phosphate group to the conserved aspartic acid residue in the regulatory domain of NarL. In turn, NarL binds to the upstream promoter regions of target genes to regulate their expression during aerobic nitrate metabolism. The chain is Sensor histidine kinase NarS from Mycobacterium tuberculosis (strain ATCC 25618 / H37Rv).